A 376-amino-acid polypeptide reads, in one-letter code: Crh-like protein 4 (376 aa).

An N-terminal signal peptide occupies residues 1-21; that stretch reads MFPKIFLTAATALLSAKSTFA. The GH16 domain maps to 22–229; it reads QTYSSCNPLF…WARGPTDYSN (208 aa). Cysteine 27 and cysteine 35 are disulfide-bonded. The active-site Nucleophile is glutamate 119. The Proton donor role is filled by glutamate 123. Chitin contacts are provided by glutamate 123, lysine 202, tryptophan 206, and threonine 217. Serine 346 carries the GPI-anchor amidated serine lipid modification. Residues 347 to 376 constitute a propeptide, removed in mature form; the sequence is ASPINISRINPLLLCGPFTFFFFAAIRRWP. N-linked (GlcNAc...) asparagine glycosylation is present at asparagine 351.

The protein belongs to the glycosyl hydrolase 16 family. CRH1 subfamily.

It is found in the cell membrane. It carries out the reaction Random endo-hydrolysis of N-acetyl-beta-D-glucosaminide (1-&gt;4)-beta-linkages in chitin and chitodextrins.. Functionally, dual chitinase/transglycosylase that plays a role in cell wall architecture. Chitinase and transglycosylase activities are coupled. Required for the polysaccharide cross-linking at the septa and the cell wall. More specifically, transfers chitin to 1,6-beta-glucan in the cell wall. The protein is Crh-like protein 4 of Botryotinia fuckeliana (strain B05.10) (Noble rot fungus).